Reading from the N-terminus, the 831-residue chain is MVSSVLEVSHVFCCPNRVRGALSWNTGPGGLLAFGTSCSVVLYDPQKKVVITNLNGHTARVNCLQWIRTEDGSPSNELVSGGSDNRVIHWELENNQVLKSVRLQGHEGPVCAVHAIYQSGPSEGEQHALIASAASDSTVRIWSKKGSEVKYLQTLSFRDGFVLSVCLAILPGTNVPVLACGDDDCRIHLYIQQDDQFQKALSLCGHEDWIRGVEWATFGRDLFLASCSQDCLIRIWRLYMKPASFETKDGSLRLKENTFTIKDGGVRTTVAVTLETVLAGHENWVNAVHWQPSFYKDGVLQQPVRLLSASMDKTMILWAPDEESGVWLEQVRVGEVGGNTLGFYDCQFGENGTMIIAHAFHGALHLWKQSTVNPRQWAPEIVISGHFDGVQDLMWDPEGEFIITTSTDQTTRLFAPWKKKDQKDRSQVTWHEIARPQIHGYNIKCLAMIDRFQFVSGADEKVLRVFSAPRNFVENFSVISRQSLSHMLCDDQDLPEGATVPALGLSNKALFQGDIASQPFEEDELISPAFGSPQVTFQPAVLNEPPTEDHLLQNTLWPEIQKLYGHGYEIVCVACNNSKTLLASACKASQKEHAAIILWSTASWKQVQSLAFHTLTVTQMTFSPDDKFLLAVSRDRTWSLWKRQDATSSEFDPFFSLFAFTNKITSVHSRIIWSCDWSPDNKYFFTGSRDKKVVVWGECKSSHNPMEHPIRPCSSILDVGSSVTAVSVCPVLNPAQRYIVAIGLESGKICIYSWNKTNQEINDWTSCVETNPSQSHSLGIRRLCWKSCSDDDDDDDDDDTEQSEEGPEWLHFASCGEDHTVKIYRVNRRAL.

WD repeat units lie at residues 56–100 (GHTA…VLKS), 105–152 (GHEG…VKYL), 158–200 (RDGF…FQKA), 205–246 (GHED…ASFE), 280–328 (GHEN…GVWL), 338–377 (GNTL…PRQW), 385–424 (GHFD…DQKD), 438–476 (IHGY…VENF), 565–609 (GHGY…QVQS), 612–651 (FHTL…SSEF), 667–706 (VHSR…HNPM), 718–762 (DVGS…QEIN), and 775–831 (SHSL…RRAL).

The protein belongs to the WD repeat ELP2 family. In terms of assembly, component of the elongator complex which consists of ELP1, ELP2, ELP3, ELP4, ELP5 and ELP6. Interacts with STAT3 and JAKs.

The protein localises to the cytoplasm. Its subcellular location is the nucleus. It functions in the pathway tRNA modification; 5-methoxycarbonylmethyl-2-thiouridine-tRNA biosynthesis. Component of the elongator complex which is required for multiple tRNA modifications, including mcm5U (5-methoxycarbonylmethyl uridine), mcm5s2U (5-methoxycarbonylmethyl-2-thiouridine), and ncm5U (5-carbamoylmethyl uridine). The elongator comple catalyzes the formation of carboxymethyluridine in the wobble base at position 34 in tRNAs. The polypeptide is Elongator complex protein 2 (Elp2) (Mus musculus (Mouse)).